Here is a 185-residue protein sequence, read N- to C-terminus: Probable RNA 2'-phosphotransferase (185 aa).

Belongs to the KptA/TPT1 family.

Functionally, removes the 2'-phosphate from RNA via an intermediate in which the phosphate is ADP-ribosylated by NAD followed by a presumed transesterification to release the RNA and generate ADP-ribose 1''-2''-cyclic phosphate (APPR&gt;P). May function as an ADP-ribosylase. The chain is Probable RNA 2'-phosphotransferase from Rhizobium rhizogenes (strain K84 / ATCC BAA-868) (Agrobacterium radiobacter).